The sequence spans 148 residues: Gametocyte-specific factor 1-like (148 aa).

2 CHHC U11-48K-type zinc fingers span residues phenylalanine 6–asparagine 33 and methionine 40–serine 67. Cysteine 9, histidine 15, histidine 25, cysteine 29, cysteine 43, histidine 49, histidine 59, and cysteine 63 together coordinate Zn(2+). The interval serine 67–proline 99 is disordered. Polar residues predominate over residues proline 82–serine 95.

It belongs to the UPF0224 (FAM112) family.

This Homo sapiens (Human) protein is Gametocyte-specific factor 1-like (GTSF1L).